Reading from the N-terminus, the 699-residue chain is DNA ligase (699 aa).

Residues 47 to 51 (DAQYD), 96 to 97 (SL), and Glu-128 contribute to the NAD(+) site. Lys-130 serves as the catalytic N6-AMP-lysine intermediate. 4 residues coordinate NAD(+): Arg-151, Glu-186, Lys-303, and Lys-327. Positions 422, 425, 440, and 446 each coordinate Zn(2+). A BRCT domain is found at 620–699 (GDNLLLSNQT…EEWIKMVNEL (80 aa)).

It belongs to the NAD-dependent DNA ligase family. LigA subfamily. It depends on Mg(2+) as a cofactor. The cofactor is Mn(2+).

It catalyses the reaction NAD(+) + (deoxyribonucleotide)n-3'-hydroxyl + 5'-phospho-(deoxyribonucleotide)m = (deoxyribonucleotide)n+m + AMP + beta-nicotinamide D-nucleotide.. Its function is as follows. DNA ligase that catalyzes the formation of phosphodiester linkages between 5'-phosphoryl and 3'-hydroxyl groups in double-stranded DNA using NAD as a coenzyme and as the energy source for the reaction. It is essential for DNA replication and repair of damaged DNA. The chain is DNA ligase from Orientia tsutsugamushi (strain Ikeda) (Rickettsia tsutsugamushi).